The chain runs to 336 residues: Ketol-acid reductoisomerase (NADP(+)) 1 (336 aa).

Positions 2-181 (AKVYYEKDVT…GATRAGVLET (180 aa)) constitute a KARI N-terminal Rossmann domain. Residues 25–28 (YGSQ), Arg-48, Ser-52, and 82–85 (DELQ) each bind NADP(+). Residue His-107 is part of the active site. Gly-133 is an NADP(+) binding site. The KARI C-terminal knotted domain maps to 182–327 (TFKEETETDL…RKLRGMMPFV (146 aa)). The Mg(2+) site is built by Asp-190, Glu-194, Glu-226, and Glu-230. Residue Ser-251 participates in substrate binding.

It belongs to the ketol-acid reductoisomerase family. The cofactor is Mg(2+).

It carries out the reaction (2R)-2,3-dihydroxy-3-methylbutanoate + NADP(+) = (2S)-2-acetolactate + NADPH + H(+). It catalyses the reaction (2R,3R)-2,3-dihydroxy-3-methylpentanoate + NADP(+) = (S)-2-ethyl-2-hydroxy-3-oxobutanoate + NADPH + H(+). The protein operates within amino-acid biosynthesis; L-isoleucine biosynthesis; L-isoleucine from 2-oxobutanoate: step 2/4. Its pathway is amino-acid biosynthesis; L-valine biosynthesis; L-valine from pyruvate: step 2/4. Involved in the biosynthesis of branched-chain amino acids (BCAA). Catalyzes an alkyl-migration followed by a ketol-acid reduction of (S)-2-acetolactate (S2AL) to yield (R)-2,3-dihydroxy-isovalerate. In the isomerase reaction, S2AL is rearranged via a Mg-dependent methyl migration to produce 3-hydroxy-3-methyl-2-ketobutyrate (HMKB). In the reductase reaction, this 2-ketoacid undergoes a metal-dependent reduction by NADPH to yield (R)-2,3-dihydroxy-isovalerate. This Bacillus anthracis protein is Ketol-acid reductoisomerase (NADP(+)) 1.